The chain runs to 395 residues: LL-diaminopimelate aminotransferase (395 aa).

The substrate site is built by Tyr14 and Gly41. Residues Tyr71, 104–105 (AK), Tyr128, Asn174, Tyr205, and 233–235 (SFS) each bind pyridoxal 5'-phosphate. Substrate-binding residues include Lys105, Tyr128, and Asn174. At Lys236 the chain carries N6-(pyridoxal phosphate)lysine. The pyridoxal 5'-phosphate site is built by Arg244 and Asn275. Positions 275 and 368 each coordinate substrate.

The protein belongs to the class-I pyridoxal-phosphate-dependent aminotransferase family. LL-diaminopimelate aminotransferase subfamily. Homodimer. Pyridoxal 5'-phosphate serves as cofactor.

It catalyses the reaction (2S,6S)-2,6-diaminopimelate + 2-oxoglutarate = (S)-2,3,4,5-tetrahydrodipicolinate + L-glutamate + H2O + H(+). It participates in amino-acid biosynthesis; L-lysine biosynthesis via DAP pathway; LL-2,6-diaminopimelate from (S)-tetrahydrodipicolinate (aminotransferase route): step 1/1. Functionally, involved in the synthesis of meso-diaminopimelate (m-DAP or DL-DAP), required for both lysine and peptidoglycan biosynthesis. Catalyzes the direct conversion of tetrahydrodipicolinate to LL-diaminopimelate. The chain is LL-diaminopimelate aminotransferase from Chlamydia caviae (strain ATCC VR-813 / DSM 19441 / 03DC25 / GPIC) (Chlamydophila caviae).